The primary structure comprises 174 residues: ATP-dependent protease subunit HslV (174 aa).

Residue threonine 2 is part of the active site. Glycine 157, cysteine 160, and threonine 163 together coordinate Na(+).

It belongs to the peptidase T1B family. HslV subfamily. As to quaternary structure, a double ring-shaped homohexamer of HslV is capped on each side by a ring-shaped HslU homohexamer. The assembly of the HslU/HslV complex is dependent on binding of ATP.

Its subcellular location is the cytoplasm. It carries out the reaction ATP-dependent cleavage of peptide bonds with broad specificity.. Its activity is regulated as follows. Allosterically activated by HslU binding. In terms of biological role, protease subunit of a proteasome-like degradation complex believed to be a general protein degrading machinery. The sequence is that of ATP-dependent protease subunit HslV from Shewanella sediminis (strain HAW-EB3).